We begin with the raw amino-acid sequence, 362 residues long: Hepatic sodium/bile acid cotransporter (362 aa).

The Extracellular segment spans residues 1–22 (MEVHNVSAPFNFSLPPGFGHRA). Asn5 and Asn11 each carry an N-linked (GlcNAc...) asparagine glycan. A helical transmembrane segment spans residues 23–44 (TDKALSIILVLMLLLIMLSLGC). Topologically, residues 45 to 47 (TME) are cytoplasmic. The helical transmembrane segment at 48-83 (FSKIKAHLWKPKGVIVALVAQFGIMPLAAFLLGKIF) threads the bilayer. Residues 84 to 86 (HLS) lie on the Extracellular side of the membrane. A discontinuously helical transmembrane segment spans residues 87 to 112 (NIEALAILICGCSPGGNLSNLFTLAM). Topologically, residues 113–115 (KGD) are cytoplasmic. Residues 116-142 (MNLSIVMTTCSSFSALGMMPLLLYVYS) traverse the membrane as a helical segment. Residues 143–156 (KGIYDGDLKDKVPY) lie on the Extracellular side of the membrane. The chain crosses the membrane as a helical span at residues 157–179 (KGIMISLVIVLIPCTIGIVLKSK). The Cytoplasmic segment spans residues 180 to 183 (RPHY). A helical transmembrane segment spans residues 184-217 (VPYILKGGMIITFLLSVAVTALSVINVGNSIMFV). Over 218 to 219 (MT) the chain is Extracellular. Residues 220–243 (PHLLATSSLMPFSGFLMGYILSAL) traverse the membrane as a helical segment. The Cytoplasmic portion of the chain corresponds to 244–247 (FQLN). Residues 248–273 (PSCRRTISMETGFQNIQLCSTILNVT) form a discontinuously helical membrane-spanning segment. The Extracellular segment spans residues 274–280 (FPPEVIG). A helical transmembrane segment spans residues 281-311 (PLFFFPLLYMIFQLAEGLLIIIIFRCYEKIK). Over 312–362 (PPKDQTKITYKAAATEDATPAALEKGTHNGNIPPLQPGPSPNGLNSGQMAN) the chain is Cytoplasmic. Position 330 is a phosphothreonine (Thr330). The interval 333 to 362 (ALEKGTHNGNIPPLQPGPSPNGLNSGQMAN) is disordered. The segment covering 353–362 (NGLNSGQMAN) has biased composition (polar residues).

This sequence belongs to the bile acid:sodium symporter (BASS) (TC 2.A.28) family. As to expression, highly expressed in liver and low expression in kidney.

Its subcellular location is the cell membrane. The enzyme catalyses taurocholate(out) + 2 Na(+)(out) = taurocholate(in) + 2 Na(+)(in). It catalyses the reaction taurochenodeoxycholate(out) + 2 Na(+)(out) = taurochenodeoxycholate(in) + 2 Na(+)(in). It carries out the reaction tauroursodeoxycholate(out) + 2 Na(+)(out) = tauroursodeoxycholate(in) + 2 Na(+)(in). The catalysed reaction is glycocholate(out) + 2 Na(+)(out) = glycocholate(in) + 2 Na(+)(in). The enzyme catalyses estrone 3-sulfate(out) + 2 Na(+)(out) = estrone 3-sulfate(in) + 2 Na(+)(in). It catalyses the reaction cholate(out) + 2 Na(+)(out) = cholate(in) + 2 Na(+)(in). It carries out the reaction tauronorcholate(out) + 2 Na(+)(out) = tauronorcholate(in) + 2 Na(+)(in). The catalysed reaction is taurodeoxycholate(out) + 2 Na(+)(out) = taurodeoxycholate(in) + 2 Na(+)(in). The enzyme catalyses tauroallocholate(out) + 2 Na(+)(out) = tauroallocholate(in) + 2 Na(+)(in). It catalyses the reaction taurohyodeoxycholate(out) + 2 Na(+)(out) = taurohyodeoxycholate(in) + 2 Na(+)(in). It carries out the reaction taurohyocholate(out) + 2 Na(+)(out) = taurohyocholate(in) + 2 Na(+)(in). The catalysed reaction is tauro-beta-muricholate(out) + 2 Na(+)(out) = tauro-beta-muricholate(in) + 2 Na(+)(in). The transport of bile acids is sodium-dependent. Functionally, as a major transporter of conjugated bile salts from plasma into the hepatocyte, it plays a key role in the enterohepatic circulation of bile salts necessary for the solubilization and absorption of dietary fat and fat-soluble vitamins. It is strictly dependent on the extracellular presence of sodium. It exhibits broad substrate specificity and transports various bile acids, such as taurocholate, cholate, as well as non-bile acid organic compounds, such as estrone sulfate. Works collaboratively with the ileal transporter (NTCP2), the organic solute transporter (OST), and the bile salt export pump (BSEP), to ensure efficacious biological recycling of bile acids during enterohepatic circulation. This chain is Hepatic sodium/bile acid cotransporter (Slc10a1), found in Rattus norvegicus (Rat).